The chain runs to 55 residues: Small polypeptide DEVIL 10 (55 aa).

An N-linked (GlcNAc...) asparagine glycan is attached at N7. The interval 19–50 is required for DVL/RTFL small polypeptide activity; the sequence is RFGDRCLLMAKQQRTRLYILRRCVSMLLCWHD. Residues 32–48 form a helical membrane-spanning segment; sequence RTRLYILRRCVSMLLCW.

The protein belongs to the DVL/RTFL small polypeptides family.

It localises to the cell membrane. Functionally, small polypeptide acting as a regulatory molecule which coordinates cellular responses required for differentiation, growth and development, probably by restricting polar cell proliferation in lateral organs and coordinating socket cell recruitment and differentiation at trichome sites. This Arabidopsis thaliana (Mouse-ear cress) protein is Small polypeptide DEVIL 10.